The following is a 90-amino-acid chain: Lantipeptide prochlorosin 1.7 (90 aa).

Residues 1-68 constitute a propeptide that is removed on maturation; the sequence is MSEEQLKAFI…DAELEGVAGG (68 aa). 2,3-didehydrobutyrine is present on residues T69 and T73. Residues 76 to 79 constitute a cross-link (lanthionine (Ser-Cys)); sequence SITC. 2 cross-links (beta-methyllanthionine (Thr-Cys)) span residues 78–82 and 81–90; these read TCETC and TCDLLVGKMC.

In terms of processing, cross-links are proved in vitro, when coepressed in E.coli with the ProcM lanthionine synthetase. Post-translationally, the lanthionine residue has a DL configuration (with 2S,6R stereochemistry), whereas the beta-methyllanthionine residues have a DL configuration (with 2S,3S,6R stereochemistry). Maturation of prochlorosin involves the enzymatic conversion of Thr, and Ser into dehydrated AA and the formation of thioether bonds with cysteines. This is followed by membrane translocation and cleavage of the modified precursor.

Its subcellular location is the secreted. Its function is as follows. Lanthionine-containing peptide (lantipeptide) with unknown function. Does not show antibiotic activity against Lactococcus lactis 117 and Bacillus subtilis 6633 bacteria. Organisms that produce this peptide live in oligotrophic environments at very dilute concentrations, suggesting this peptide is not secreted to influence other bacteria. The polypeptide is Lantipeptide prochlorosin 1.7 (Prochlorococcus marinus (strain MIT 9313)).